The chain runs to 175 residues: Small ribosomal subunit protein uS5 (175 aa).

Residues 1–21 are disordered; that stretch reads MAKPERNKKPQQAEERDDGMR. The S5 DRBM domain occupies 20-83; the sequence is MREKMVAVNR…EEARRKMAKV (64 aa).

This sequence belongs to the universal ribosomal protein uS5 family. Part of the 30S ribosomal subunit. Contacts proteins S4 and S8.

In terms of biological role, with S4 and S12 plays an important role in translational accuracy. Functionally, located at the back of the 30S subunit body where it stabilizes the conformation of the head with respect to the body. This chain is Small ribosomal subunit protein uS5, found in Dechloromonas aromatica (strain RCB).